A 349-amino-acid chain; its full sequence is uncharacterized protein (349 aa).

Transmembrane regions (helical) follow at residues 15–35 (VHSP…NPVT), 53–73 (ISFC…MILI), 91–111 (WFLL…LMFS), 120–140 (NVVL…ILLL), 147–167 (LSMV…FWGV), 179–199 (FGLG…TTIL), 218–238 (LLGT…DHFM), 248–268 (WMLI…LAGL), 276–296 (INLA…LILL), and 302–322 (AQYL…IDNL). 2 consecutive EamA domains span residues 39 to 164 (IELG…VTVF) and 191 to 319 (FISA…LSFI).

Belongs to the EamA transporter family.

Its subcellular location is the cell membrane. This is an uncharacterized protein from Synechocystis sp. (strain ATCC 27184 / PCC 6803 / Kazusa).